We begin with the raw amino-acid sequence, 728 residues long: UvrABC system protein C (728 aa).

Residues 16–95 (DSPGVYRFRD…IKEYDPRFNV (80 aa)) form the GIY-YIG domain. The region spanning 208–243 (GTYLRRLERQMAEAAEEMEYERAARLRDDIGALKKA) is the UVR domain. Disordered stretches follow at residues 473 to 535 (ADGE…GRPK) and 689 to 728 (VNTATGEIMDDDDGAPETTADAPGEPVSAGTPDERRGQER). Positions 487–505 (GDAAPNGDAAPNDGAAPDD) are enriched in low complexity.

Belongs to the UvrC family. In terms of assembly, interacts with UvrB in an incision complex.

The protein resides in the cytoplasm. Functionally, the UvrABC repair system catalyzes the recognition and processing of DNA lesions. UvrC both incises the 5' and 3' sides of the lesion. The N-terminal half is responsible for the 3' incision and the C-terminal half is responsible for the 5' incision. The sequence is that of UvrABC system protein C from Streptomyces coelicolor (strain ATCC BAA-471 / A3(2) / M145).